The primary structure comprises 63 residues: UPF0337 protein RA1131 (63 aa).

Positions 1–63 (MGSAKDKVAG…DAVKGAVDKT (63 aa)) are disordered. The segment covering 34–49 (AKGAAQEAKGGAQQAK) has biased composition (low complexity). A compositionally biased stretch (basic and acidic residues) spans 51 to 63 (KLKDAVKGAVDKT).

This sequence belongs to the UPF0337 (CsbD) family.

The chain is UPF0337 protein RA1131 from Rhizobium meliloti (strain 1021) (Ensifer meliloti).